The chain runs to 196 residues: Imidazole glycerol phosphate synthase subunit HisH (196 aa).

Residues 2 to 196 enclose the Glutamine amidotransferase type-1 domain; that stretch reads NVVILDTGCA…AKLLKNFLEM (195 aa). Residue Cys-77 is the Nucleophile of the active site. Active-site residues include His-178 and Glu-180.

In terms of assembly, heterodimer of HisH and HisF.

The protein localises to the cytoplasm. The enzyme catalyses 5-[(5-phospho-1-deoxy-D-ribulos-1-ylimino)methylamino]-1-(5-phospho-beta-D-ribosyl)imidazole-4-carboxamide + L-glutamine = D-erythro-1-(imidazol-4-yl)glycerol 3-phosphate + 5-amino-1-(5-phospho-beta-D-ribosyl)imidazole-4-carboxamide + L-glutamate + H(+). It carries out the reaction L-glutamine + H2O = L-glutamate + NH4(+). The protein operates within amino-acid biosynthesis; L-histidine biosynthesis; L-histidine from 5-phospho-alpha-D-ribose 1-diphosphate: step 5/9. In terms of biological role, IGPS catalyzes the conversion of PRFAR and glutamine to IGP, AICAR and glutamate. The HisH subunit catalyzes the hydrolysis of glutamine to glutamate and ammonia as part of the synthesis of IGP and AICAR. The resulting ammonia molecule is channeled to the active site of HisF. In Shigella dysenteriae serotype 1 (strain Sd197), this protein is Imidazole glycerol phosphate synthase subunit HisH.